A 206-amino-acid polypeptide reads, in one-letter code: Ras-related protein RABG3d (206 aa).

Residue 15–22 (GDSGVGKT) coordinates GTP. An Effector region motif is present at residues 37-45 (YKATIGADF). GTP contacts are provided by residues 63–67 (DTAGQ), 125–128 (NKTD), and 158–159 (SA). S-geranylgeranyl cysteine attachment occurs at residues Cys-204 and Cys-206. Cys-206 is modified (cysteine methyl ester).

The protein belongs to the small GTPase superfamily. Rab family.

The protein resides in the cell membrane. Intracellular vesicle trafficking and protein transport. This chain is Ras-related protein RABG3d (RABG3D), found in Arabidopsis thaliana (Mouse-ear cress).